A 458-amino-acid chain; its full sequence is ATP synthase subunit beta (458 aa).

ATP is bound at residue 148–155 (GGAGVGKT).

It belongs to the ATPase alpha/beta chains family. F-type ATPases have 2 components, CF(1) - the catalytic core - and CF(0) - the membrane proton channel. CF(1) has five subunits: alpha(3), beta(3), gamma(1), delta(1), epsilon(1). CF(0) has three main subunits: a(1), b(2) and c(9-12). The alpha and beta chains form an alternating ring which encloses part of the gamma chain. CF(1) is attached to CF(0) by a central stalk formed by the gamma and epsilon chains, while a peripheral stalk is formed by the delta and b chains.

It localises to the cell inner membrane. It catalyses the reaction ATP + H2O + 4 H(+)(in) = ADP + phosphate + 5 H(+)(out). Produces ATP from ADP in the presence of a proton gradient across the membrane. The catalytic sites are hosted primarily by the beta subunits. This chain is ATP synthase subunit beta, found in Francisella tularensis subsp. novicida (strain U112).